A 141-amino-acid chain; its full sequence is Nucleoside diphosphate kinase (141 aa).

Positions 11, 59, 87, 93, 104, and 114 each coordinate ATP. H117 serves as the catalytic Pros-phosphohistidine intermediate.

It belongs to the NDK family. As to quaternary structure, homotetramer. Mg(2+) is required as a cofactor.

Its subcellular location is the cytoplasm. It catalyses the reaction a 2'-deoxyribonucleoside 5'-diphosphate + ATP = a 2'-deoxyribonucleoside 5'-triphosphate + ADP. The catalysed reaction is a ribonucleoside 5'-diphosphate + ATP = a ribonucleoside 5'-triphosphate + ADP. Major role in the synthesis of nucleoside triphosphates other than ATP. The ATP gamma phosphate is transferred to the NDP beta phosphate via a ping-pong mechanism, using a phosphorylated active-site intermediate. The sequence is that of Nucleoside diphosphate kinase from Paraburkholderia phytofirmans (strain DSM 17436 / LMG 22146 / PsJN) (Burkholderia phytofirmans).